The following is a 947-amino-acid chain: Serine/threonine-protein kinase PKH2 (947 aa).

Over residues 1-14 (MHKFRYSLHQHYSK) the composition is skewed to basic residues. Disordered regions lie at residues 1–43 (MHKF…SSSS), 108–132 (SLGN…LSSH), and 162–212 (FNHL…NEEN). Residues 108–117 (SLGNTTNETG) show a composition bias toward polar residues. A compositionally biased stretch (acidic residues) spans 187–198 (NTEEEENNDDTD). The span at 199–212 (EIPKSETLKQNEEN) shows a compositional bias: basic and acidic residues. Residues 240–502 (FKFGKELGEG…IPEIQKHYFF (263 aa)) form the Protein kinase domain. Residues 250–252 (SYS) and Lys269 each bind ATP. Residues 271–316 (LDKRHIIKEKKVKYVNIEKHALNRLSNRLGVISLYFTFQDKDSLYF) are PIF-pocket. ATP contacts are provided by residues 319–321 (DYA) and Glu325. The active-site Proton acceptor is Asp364. 2 residues coordinate ATP: Glu368 and Asp382. Composition is skewed to low complexity over residues 550–579 (VKKS…KGSS) and 618–632 (SSTS…SNSN). Disordered stretches follow at residues 550–598 (VKKS…STEK), 611–644 (KPAT…QQDY), 660–686 (SVGS…IHQQ), and 794–816 (NMKR…ASTS). The span at 802-811 (DSKKSMDIER) shows a compositional bias: basic and acidic residues.

This sequence belongs to the protein kinase superfamily. AGC Ser/Thr protein kinase family. PDPK1 subfamily.

Its subcellular location is the nucleus. It localises to the cytoplasm. The protein localises to the cell cortex. It catalyses the reaction L-seryl-[protein] + ATP = O-phospho-L-seryl-[protein] + ADP + H(+). The enzyme catalyses L-threonyl-[protein] + ATP = O-phospho-L-threonyl-[protein] + ADP + H(+). In terms of biological role, serine/threonine-protein kinase which is part sphingolipid-mediated signaling pathway that is required for the internalization step of endocytosis by regulating eisosome assembly and organization, and modulating the organization of the plasma membrane. Phosphorylates and activates PKC1. Activates YPK1 and YPK2, 2 components of signaling cascade required for maintenance of cell wall integrity. Required for stress-induced P-body assembly and regulates global mRNA decay at the deadenylation step. The polypeptide is Serine/threonine-protein kinase PKH2 (Candida albicans (strain SC5314 / ATCC MYA-2876) (Yeast)).